The chain runs to 147 residues: Putative pre-16S rRNA nuclease (147 aa).

The protein belongs to the YqgF nuclease family.

The protein localises to the cytoplasm. Could be a nuclease involved in processing of the 5'-end of pre-16S rRNA. The chain is Putative pre-16S rRNA nuclease from Ligilactobacillus salivarius (strain UCC118) (Lactobacillus salivarius).